Reading from the N-terminus, the 367-residue chain is Heme A synthase (367 aa).

The next 8 helical transmembrane spans lie at Ile-26–Ala-46, Leu-111–Gly-131, Leu-139–Val-159, Leu-174–Gly-194, Ala-212–Leu-232, Phe-272–Ala-292, Ser-305–Leu-325, and Val-327–Ile-347. Residue His-274 coordinates heme. Residue His-335 coordinates heme.

It belongs to the COX15/CtaA family. Type 2 subfamily. Interacts with CtaB. Heme b is required as a cofactor.

The protein resides in the cell membrane. The catalysed reaction is Fe(II)-heme o + 2 A + H2O = Fe(II)-heme a + 2 AH2. It functions in the pathway porphyrin-containing compound metabolism; heme A biosynthesis; heme A from heme O: step 1/1. Functionally, catalyzes the conversion of heme O to heme A by two successive hydroxylations of the methyl group at C8. The first hydroxylation forms heme I, the second hydroxylation results in an unstable dihydroxymethyl group, which spontaneously dehydrates, resulting in the formyl group of heme A. This chain is Heme A synthase, found in Sinorhizobium medicae (strain WSM419) (Ensifer medicae).